A 103-amino-acid chain; its full sequence is Histone H4 (103 aa).

Residues methionine 1–glycine 14 show a composition bias toward gly residues. A disordered region spans residues methionine 1 to arginine 20. Lysine 6 is modified (N6-acetyl-N6-methyllysine; alternate). 3 positions are modified to N6-methyllysine; alternate: lysine 6, lysine 9, and lysine 13. Lysine 13 bears the N6-acetyl-N6-methyllysine; alternate mark. A DNA-binding region spans residues lysine 17–lysine 21. Residue lysine 92 is modified to N6-glutaryllysine.

It belongs to the histone H4 family. The nucleosome is a histone octamer containing two molecules each of H2A, H2B, H3 and H4 assembled in one H3-H4 heterotetramer and two H2A-H2B heterodimers. The octamer wraps approximately 147 bp of DNA. In terms of processing, glutarylation at Lys-92 (H4K91glu) destabilizes nucleosomes by promoting dissociation of the H2A-H2B dimers from nucleosomes.

The protein resides in the nucleus. It is found in the chromosome. Core component of nucleosome. Nucleosomes wrap and compact DNA into chromatin, limiting DNA accessibility to the cellular machineries which require DNA as a template. Histones thereby play a central role in transcription regulation, DNA repair, DNA replication and chromosomal stability. DNA accessibility is regulated via a complex set of post-translational modifications of histones, also called histone code, and nucleosome remodeling. The protein is Histone H4 (HHF1) of Mycosarcoma maydis (Corn smut fungus).